Here is a 350-residue protein sequence, read N- to C-terminus: Small ribosomal subunit biogenesis GTPase RsgA (350 aa).

The segment covering 1-17 (MSKNKLSKGQQRRVNAN) has biased composition (polar residues). Residues 1–33 (MSKNKLSKGQQRRVNANHQRRLKTSKEKPDYDD) are disordered. One can recognise a CP-type G domain in the interval 104–273 (TSVLTRPDFY…VIDSPGVREF (170 aa)). GTP contacts are provided by residues 160–163 (NKID) and 214–222 (GQSGVGKSS). Positions 297, 302, 304, and 310 each coordinate Zn(2+).

Belongs to the TRAFAC class YlqF/YawG GTPase family. RsgA subfamily. As to quaternary structure, monomer. Associates with 30S ribosomal subunit, binds 16S rRNA. Zn(2+) serves as cofactor.

It is found in the cytoplasm. Functionally, one of several proteins that assist in the late maturation steps of the functional core of the 30S ribosomal subunit. Helps release RbfA from mature subunits. May play a role in the assembly of ribosomal proteins into the subunit. Circularly permuted GTPase that catalyzes slow GTP hydrolysis, GTPase activity is stimulated by the 30S ribosomal subunit. The sequence is that of Small ribosomal subunit biogenesis GTPase RsgA from Shigella flexneri.